Here is a 261-residue protein sequence, read N- to C-terminus: UPF0246 protein PMI0005 (261 aa).

It belongs to the UPF0246 family.

The polypeptide is UPF0246 protein PMI0005 (Proteus mirabilis (strain HI4320)).